A 519-amino-acid polypeptide reads, in one-letter code: uncharacterized protein (519 aa).

The next 4 helical transmembrane spans lie at 141–161 (GSSL…ANVF), 202–222 (LGET…WALA), 385–405 (FVVR…PFVG), and 433–453 (TVVP…AELV).

The protein localises to the cell membrane. This is an uncharacterized protein from Sinorhizobium fredii (strain NBRC 101917 / NGR234).